A 562-amino-acid polypeptide reads, in one-letter code: MAASAKRKQEEKHLKMLRDMTGLPHNRKCFDCDQRGPTYVNMTVGSFVCTSCSGSLRGLNPPHRVKSISMTTFTQQEIEFLQKHGNEVCKQIWLGLFDDRSSAIPDFRDPQKVKEFLQEKYEKKRWYVPPEQAKVVASVHASISGSSASSTSSTPEVKPLKSLLGDSAPALHLNKGTPSQSPVVGRSQAQQQEKKQFDLLSDLGSDIFAAPAPQSTATANFANFAHFNSHAAQNSANADFANFDAFGQSSGSSNFGGFPTASHSSFQPQTTGGSAGSVNANFAHFDNFPKSSSADFGTFNTSQSHQTASAVSKVSANKAGLQTTDKYAALANLDNIFSAGQGGDQGSGFGTTGKAPVGSVVSVPSQSSASSDKYAALAELDSVFSSAATSSNAYTSTSNASSNVFGTVPVGASAQTQPASSSVPAPFGATPSTNPFVAAAGPSVASSTNPFQTNARGATAATFGTASMSMPAGFGTPAPYSLPTSFSGSFQQPAFPAQAAFPQQTAFSQQPNGAGFAAFGQTKPVVTPFGQVGAAGVSSNPFMTGAPTGQFPTGSSSTNPFL.

The Arf-GAP domain maps to 11–135 (EKHLKMLRDM…WYVPPEQAKV (125 aa)). The segment at 29-52 (CFDCDQRGPTYVNMTVGSFVCTSC) adopts a C4-type zinc-finger fold. Residue S167 is modified to Phosphoserine. Positions 168-194 (APALHLNKGTPSQSPVVGRSQAQQQEK) are disordered. Polar residues predominate over residues 176-191 (GTPSQSPVVGRSQAQQ). T177 carries the post-translational modification Phosphothreonine. S181 and S362 each carry phosphoserine. O-linked (GlcNAc) serine glycosylation occurs at S367.

As to quaternary structure, interacts with EPS15R and EPS15. Interacts with FCHO1. O-glycosylated.

The protein localises to the nucleus. It localises to the cytoplasmic vesicle. Functionally, required for vesicle docking or fusion during acrosome biogenesis. May play a role in RNA trafficking or localization. The protein is Arf-GAP domain and FG repeat-containing protein 1 (AGFG1) of Bos taurus (Bovine).